The chain runs to 178 residues: Inner membrane-spanning protein YciB (178 aa).

Transmembrane regions (helical) follow at residues 22-42 (IFYA…MTYF), 50-70 (ASLI…AFHS), 72-92 (LFIK…LLGS), 121-141 (MAWA…AFWL), and 149-169 (FKVF…VVYI).

The protein belongs to the YciB family.

The protein localises to the cell inner membrane. Its function is as follows. Plays a role in cell envelope biogenesis, maintenance of cell envelope integrity and membrane homeostasis. In Photorhabdus laumondii subsp. laumondii (strain DSM 15139 / CIP 105565 / TT01) (Photorhabdus luminescens subsp. laumondii), this protein is Inner membrane-spanning protein YciB.